The sequence spans 474 residues: Glutamate--tRNA ligase (474 aa).

Positions 9–19 (PSPTGYLHVGG) match the 'HIGH' region motif. The 'KMSKS' region signature appears at 240-244 (KLSKR). Residue lysine 243 coordinates ATP.

The protein belongs to the class-I aminoacyl-tRNA synthetase family. Glutamate--tRNA ligase type 1 subfamily. In terms of assembly, monomer.

It localises to the cytoplasm. The catalysed reaction is tRNA(Glu) + L-glutamate + ATP = L-glutamyl-tRNA(Glu) + AMP + diphosphate. In terms of biological role, catalyzes the attachment of glutamate to tRNA(Glu) in a two-step reaction: glutamate is first activated by ATP to form Glu-AMP and then transferred to the acceptor end of tRNA(Glu). The protein is Glutamate--tRNA ligase of Aliivibrio fischeri (strain MJ11) (Vibrio fischeri).